The sequence spans 123 residues: MPTINQLVRNGRKRATKKTTTPALKGAPQKRGVCVRVYTTTPKKPNSALRKVARVRLTTGIEVTAYIPGIGHNLQEHSVVLVRGGRVKDLPGVRYHIVRGTLDTLGVSDRKQGRSKYGTKRPK.

Residues 9–28 (RNGRKRATKKTTTPALKGAP) are disordered. The span at 18-27 (KTTTPALKGA) shows a compositional bias: low complexity. D89 is modified (3-methylthioaspartic acid).

It belongs to the universal ribosomal protein uS12 family. Part of the 30S ribosomal subunit. Contacts proteins S8 and S17. May interact with IF1 in the 30S initiation complex.

Its function is as follows. With S4 and S5 plays an important role in translational accuracy. In terms of biological role, interacts with and stabilizes bases of the 16S rRNA that are involved in tRNA selection in the A site and with the mRNA backbone. Located at the interface of the 30S and 50S subunits, it traverses the body of the 30S subunit contacting proteins on the other side and probably holding the rRNA structure together. The combined cluster of proteins S8, S12 and S17 appears to hold together the shoulder and platform of the 30S subunit. This is Small ribosomal subunit protein uS12 from Desulfosudis oleivorans (strain DSM 6200 / JCM 39069 / Hxd3) (Desulfococcus oleovorans).